Consider the following 261-residue polypeptide: Imidazole glycerol phosphate synthase subunit HisF (261 aa).

Active-site residues include Asp-16 and Asp-135.

It belongs to the HisA/HisF family. In terms of assembly, heterodimer of HisH and HisF.

Its subcellular location is the cytoplasm. The catalysed reaction is 5-[(5-phospho-1-deoxy-D-ribulos-1-ylimino)methylamino]-1-(5-phospho-beta-D-ribosyl)imidazole-4-carboxamide + L-glutamine = D-erythro-1-(imidazol-4-yl)glycerol 3-phosphate + 5-amino-1-(5-phospho-beta-D-ribosyl)imidazole-4-carboxamide + L-glutamate + H(+). The protein operates within amino-acid biosynthesis; L-histidine biosynthesis; L-histidine from 5-phospho-alpha-D-ribose 1-diphosphate: step 5/9. IGPS catalyzes the conversion of PRFAR and glutamine to IGP, AICAR and glutamate. The HisF subunit catalyzes the cyclization activity that produces IGP and AICAR from PRFAR using the ammonia provided by the HisH subunit. The polypeptide is Imidazole glycerol phosphate synthase subunit HisF (Mycobacterium leprae (strain Br4923)).